The sequence spans 262 residues: (2Z,6E)-farnesyl diphosphate synthase (262 aa).

D40 is a catalytic residue. Residue D40 participates in Mg(2+) binding. Substrate is bound by residues 41-44 (GNRR), W45, and 86-88 (STE). N89 functions as the Proton acceptor in the catalytic mechanism. Substrate contacts are provided by residues R92, R211, and 217 to 219 (RLS). Residue E230 participates in Mg(2+) binding.

It belongs to the UPP synthase family. Z-FPP synthase subfamily. As to quaternary structure, homodimer. It depends on Mg(2+) as a cofactor.

It is found in the cytoplasm. Its subcellular location is the cell membrane. The catalysed reaction is isopentenyl diphosphate + (2E)-geranyl diphosphate = (2Z,6E)-farnesyl diphosphate + diphosphate. In terms of biological role, catalyzes the condensation of only one isopentenyl pyrophosphate (IPP) unit in the cis configuration to E-geranyl diphosphate (E-GPP) generating the 15 carbon product (2Z,6E)-farnesyl diphosphate (Z-FPP or EZ-FPP). Z-FPP is the precursor of decaprenyl diphosphate, which has a central role in the biosynthesis of the mycobacterial cell wall. This chain is (2Z,6E)-farnesyl diphosphate synthase, found in Mycobacterium tuberculosis (strain CDC 1551 / Oshkosh).